Reading from the N-terminus, the 383-residue chain is MIATGALLRVLLLLLAFGHSTYGAECDPACDPQHGFCEADNVCRCEPGWEGPLCEKCVTSPGCVNGLCEEPWQCVCKEGWDGKFCEIDIRACTSTPCANNGTCVDLEKGQYECSCTPGFSGKDCQHKAGPCVINGSPCQHGGACVDDEGRASHASCLCPPGFSGNFCEIVTNSCTPNPCENDGVCTDIGGDFRCRCPAGFVDKTCSRPVSNCASGPCLNGGTCLQHTQVSFECLCKPPFMGPTCAKKRGTSPVQVTHLPSGYGLTYRLTPGVHELPVQQPEHHILKVSMKELNKSAPLLTEGQAICFTILGVLTSLVVLGTVAIVFLNKCEAWVSNLRYNHMLRKKKNLLLQYNSGEELAVNIIFPEKIDMTTFNKEAGDEDI.

Positions 1–23 (MIATGALLRVLLLLLAFGHSTYG) are cleaved as a signal peptide. 6 EGF-like domains span residues 24 to 55 (AECD…PLCE), 59 to 86 (TSPG…KFCE), 88 to 125 (DIRA…KDCQ), 127 to 168 (KAGP…NFCE), 170 to 206 (VTNS…KTCS), and 208 to 245 (PVSN…PTCA). The Extracellular segment spans residues 24-306 (AECDPACDPQ…PLLTEGQAIC (283 aa)). Disulfide bonds link cysteine 26–cysteine 37, cysteine 30–cysteine 43, cysteine 45–cysteine 54, cysteine 63–cysteine 68, cysteine 76–cysteine 85, cysteine 92–cysteine 103, cysteine 97–cysteine 113, cysteine 115–cysteine 124, cysteine 131–cysteine 144, cysteine 138–cysteine 156, cysteine 158–cysteine 167, cysteine 174–cysteine 185, cysteine 179–cysteine 194, cysteine 196–cysteine 205, cysteine 212–cysteine 223, cysteine 217–cysteine 233, and cysteine 235–cysteine 244. A helical membrane pass occupies residues 307-327 (FTILGVLTSLVVLGTVAIVFL). The Cytoplasmic segment spans residues 328 to 383 (NKCEAWVSNLRYNHMLRKKKNLLLQYNSGEELAVNIIFPEKIDMTTFNKEAGDEDI).

As to quaternary structure, monomer. Interacts with SH3RF2. Post-translationally, glycosylated. Pancreas and adrenal glands (at protein level).

Its subcellular location is the membrane. The protein localises to the cytoplasm. In terms of biological role, may have a role in neuroendocrine differentiation. Inhibits adipocyte differentiation. In Rattus norvegicus (Rat), this protein is Protein delta homolog 1 (Dlk1).